The following is a 561-amino-acid chain: Putative transport protein YbjL (561 aa).

5 helical membrane-spanning segments follow: residues 8-28, 32-52, 66-86, 94-114, and 158-178; these read LLNGNYILLLFVVLALGLCLG, LGSIQLGNSIGVLVVSLLLGQ, FMLFIFCVGVEAGPNFFSIFF, MLALVMVGSALVIALGLGKLF, and NLSLGYALTYLIGLVSLIVGA. 2 RCK C-terminal domains span residues 200–288 and 292–373; these read RGLD…SFRN and VFDR…RIGF. A run of 5 helical transmembrane segments spans residues 383–403, 406–426, 451–471, 475–495, and 540–560; these read LLAFCAFFVIGLMIGMITFQF, FSFGMGNAAGLLFAGIMLGFM, VFMAGVGLSAGSGINNGLGAI, MLIAGLIVSLVPVVICFLFGA, and AIANVLLTLAGTIIVMVWPGL.

It belongs to the AAE transporter (TC 2.A.81) family. YbjL subfamily.

It is found in the cell membrane. The sequence is that of Putative transport protein YbjL from Escherichia coli O139:H28 (strain E24377A / ETEC).